The chain runs to 534 residues: MIERWLYSTNAKDIAVLYFIFAIFCGMAGTAMSLIIRLELAAPGNQVLSGNHQLFNVLVVGHAVLIIFFLVMPALIGGFGNYMLPLLIGASDMSFARLNNISFWCLPPALVCLVTSTLVESGAGTGWTVYPPLSSIQAHSGPSVDLAIFALHLTSISSLLGAINFIVTTLNMRTNGMTMHRLPLFVWSIFITAFLLLLSLPVLSAGVTMLLLDRNFNTSFFEVAGGGDPVLYQHLFWFFGHPEVYILIIPGFGIISHIVSTYSKKPVFGEVSMVYAMASIGLLGFLVWSHHMYIVGLDADTRAYFTSATMIIAIPTGIKIFSWLATIYGGSIRLAVPMLYAIAFLFLFTIGGLTGVALANASLDVAFHDTYYVVGHFHYVLSMGAIFSLFAGYYYWSPQILGLYYNEKLAQIQFWLIFVGANVIFLPMHFLGVNGMPRRIPDYPDAFAGWNYVASIGSIIAVFSLFLFIYILYDQLVNGLENKVNNKSVIYNKGPDFVESNQIFATNKIKSSSIEFLLTSPPAVHTFNTPAVQS.

The helical transmembrane segment at 16-36 threads the bilayer; that stretch reads VLYFIFAIFCGMAGTAMSLII. Residues glutamate 39, alanine 42, and glycine 44 each coordinate Ca(2+). The next 6 helical transmembrane spans lie at 57–77, 101–121, 147–167, 182–202, 235–255, and 267–287; these read VLVV…ALIG, ISFW…LVES, AIFA…NFIV, LPLF…SLPV, LFWF…FGII, and VFGE…GFLV. Histidine 62 provides a ligand contact to Fe(II)-heme a. Residue histidine 241 coordinates Cu cation. The 1'-histidyl-3'-tyrosine (His-Tyr) cross-link spans 241–245; the sequence is HPEVY. Tyrosine 245 serves as a coordination point for O2. Cu cation is bound by residues histidine 290 and histidine 291. A run of 2 helical transmembrane segments spans residues 310-330 and 338-358; these read MIIA…IYGG and MLYA…GVAL. The Mg(2+) site is built by histidine 368 and aspartate 369. Transmembrane regions (helical) follow at residues 372–392 and 412–432; these read YVVG…LFAG and IQFW…HFLG. Residue histidine 376 participates in heme a3 binding. Fe(II)-heme a is bound at residue histidine 378. Proline 441 lines the Ca(2+) pocket. Residues 452 to 472 traverse the membrane as a helical segment; the sequence is YVASIGSIIAVFSLFLFIYIL.

It belongs to the heme-copper respiratory oxidase family. As to quaternary structure, component of the cytochrome c oxidase (complex IV, CIV), a multisubunit enzyme composed of a catalytic core of 3 subunits and several supernumerary subunits. The complex exists as a monomer or a dimer and forms supercomplexes (SCs) in the inner mitochondrial membrane with ubiquinol-cytochrome c oxidoreductase (cytochrome b-c1 complex, complex III, CIII). The cofactor is heme. Cu cation serves as cofactor.

The protein localises to the mitochondrion inner membrane. It carries out the reaction 4 Fe(II)-[cytochrome c] + O2 + 8 H(+)(in) = 4 Fe(III)-[cytochrome c] + 2 H2O + 4 H(+)(out). The protein operates within energy metabolism; oxidative phosphorylation. Component of the cytochrome c oxidase, the last enzyme in the mitochondrial electron transport chain which drives oxidative phosphorylation. The respiratory chain contains 3 multisubunit complexes succinate dehydrogenase (complex II, CII), ubiquinol-cytochrome c oxidoreductase (cytochrome b-c1 complex, complex III, CIII) and cytochrome c oxidase (complex IV, CIV), that cooperate to transfer electrons derived from NADH and succinate to molecular oxygen, creating an electrochemical gradient over the inner membrane that drives transmembrane transport and the ATP synthase. Cytochrome c oxidase is the component of the respiratory chain that catalyzes the reduction of oxygen to water. Electrons originating from reduced cytochrome c in the intermembrane space (IMS) are transferred via the dinuclear copper A center (CU(A)) of subunit 2 and heme A of subunit 1 to the active site in subunit 1, a binuclear center (BNC) formed by heme A3 and copper B (CU(B)). The BNC reduces molecular oxygen to 2 water molecules using 4 electrons from cytochrome c in the IMS and 4 protons from the mitochondrial matrix. This Kluyveromyces lactis (strain ATCC 8585 / CBS 2359 / DSM 70799 / NBRC 1267 / NRRL Y-1140 / WM37) (Yeast) protein is Cytochrome c oxidase subunit 1 (COX1).